Consider the following 642-residue polypeptide: Threonine--tRNA ligase (642 aa).

The region spanning 1-61 is the TGS domain; sequence MPVITLPDGS…DTDAQLAIIT (61 aa). Positions 243-534 are catalytic; it reads DHRKIGKQLD…LTEEFAGFFP (292 aa). 3 residues coordinate Zn(2+): cysteine 334, histidine 385, and histidine 511.

The protein belongs to the class-II aminoacyl-tRNA synthetase family. As to quaternary structure, homodimer. It depends on Zn(2+) as a cofactor.

The protein localises to the cytoplasm. The enzyme catalyses tRNA(Thr) + L-threonine + ATP = L-threonyl-tRNA(Thr) + AMP + diphosphate + H(+). Functionally, catalyzes the attachment of threonine to tRNA(Thr) in a two-step reaction: L-threonine is first activated by ATP to form Thr-AMP and then transferred to the acceptor end of tRNA(Thr). Also edits incorrectly charged L-seryl-tRNA(Thr). This chain is Threonine--tRNA ligase, found in Pectobacterium atrosepticum (strain SCRI 1043 / ATCC BAA-672) (Erwinia carotovora subsp. atroseptica).